We begin with the raw amino-acid sequence, 869 residues long: MPTNLPALPMDTTPELLLAARVRDQLKADKQALFADFDLSSHVGTLVTRLRRAVDAALAEAWRGLDMPADAALVAVGGYGRGELFPYSDVDVLLLLRAEPDADTVSRLERFIGMCWDLGLEIGSSVRTVEDCIREARADITIQTSLLEARLLTGNRKLFEALRTQHQADLDPAAFFQAKLLEMRQRHAKYQDTPYALEPNCKESPGGLRDLQVILWMTKAAGLGDSWKELFERGLLTQREAQELSRNERLLKTIRARLHLVAGRRQDVLVFDLQTALAESFGYRQNANKRASEQLMRRYFWAAKAVTQLNSVLLLNIEALLFPSESQVTRVINERFVERQGMLEITSDSLYEDDPHAILETFLLYERTPGIKGLSPRTLRGLYNARTVMDARWRSDPENRRLFLAILQEPQGITHALRLMNQTSVLGRYLINFRRIVGQMQHDLFHVYTVDQHILMVVRNMRRFAIVEHTHEFPFCSQLMASFDKPWVLSVAALFHDIAKGRGGDHSKLGTVDARRFCKQHGIGREDADLICWLVEHHLTMSHVAQKQDLTDPDVVHAFARVVGDERHLTALYLLTVADVRGTSPKVWNAWKGKLLEDLYRITLRVLGGARVDPHSIWAQRQEETISQLRLKAFDPELGKPLWAQLDVAFFLRHDSRDIAWLTRHLFNKVDSPVPVVKARISPAGEGLQVAVYVKDQPDLFARICGYFERKAFSIQDAKIHTTRHGYALDTFQVTDPGLADDGGNYRDILALVEHELGDRLQQQAALPEPSQGRLSRQSRSFPIKPRVDLRPDERGQYYLLSLSANDRTGLLYAITRVLAKHRVSVHTARINTLGERVEDVFLVDGSRLAADNRLQIQLEQDLLAALEI.

A uridylyltransferase region spans residues 1–331; it reads MPTNLPALPM…FPSESQVTRV (331 aa). The tract at residues 332–688 is uridylyl-removing; that stretch reads INERFVERQG…ARISPAGEGL (357 aa). Residues 450-572 form the HD domain; that stretch reads VDQHILMVVR…VGDERHLTAL (123 aa). ACT domains follow at residues 689–773 and 800–869; these read QVAV…PSQG and LLSL…ALEI.

Belongs to the GlnD family. Mg(2+) is required as a cofactor.

The enzyme catalyses [protein-PII]-L-tyrosine + UTP = [protein-PII]-uridylyl-L-tyrosine + diphosphate. The catalysed reaction is [protein-PII]-uridylyl-L-tyrosine + H2O = [protein-PII]-L-tyrosine + UMP + H(+). Its activity is regulated as follows. Uridylyltransferase (UTase) activity is inhibited by glutamine, while glutamine activates uridylyl-removing (UR) activity. In terms of biological role, modifies, by uridylylation and deuridylylation, the PII regulatory proteins (GlnB and homologs), in response to the nitrogen status of the cell that GlnD senses through the glutamine level. Under low glutamine levels, catalyzes the conversion of the PII proteins and UTP to PII-UMP and PPi, while under higher glutamine levels, GlnD hydrolyzes PII-UMP to PII and UMP (deuridylylation). Thus, controls uridylylation state and activity of the PII proteins, and plays an important role in the regulation of nitrogen assimilation and metabolism. The protein is Bifunctional uridylyltransferase/uridylyl-removing enzyme of Cupriavidus pinatubonensis (strain JMP 134 / LMG 1197) (Cupriavidus necator (strain JMP 134)).